The sequence spans 612 residues: Transcription factor Sp2 (612 aa).

Ser78 is subject to Phosphoserine. Disordered stretches follow at residues 166 to 195 (TTPS…PVQS) and 226 to 250 (GPAQ…RKKS). Polar residues predominate over residues 184-195 (QKSSTTTTPVQS). Positions 360–368 (GEVQTVLVQ) match the 9aaTAD; inactive motif. 3 C2H2-type zinc fingers span residues 524–548 (HVCH…VRLH), 554–578 (FVCN…ARTH), and 584–606 (FECA…YKTH).

Belongs to the Sp1 C2H2-type zinc-finger protein family.

Its subcellular location is the nucleus. In terms of biological role, binds to GC box promoters elements and selectively activates mRNA synthesis from genes that contain functional recognition sites. The protein is Transcription factor Sp2 (Sp2) of Mus musculus (Mouse).